The sequence spans 112 residues: Large ribosomal subunit protein bL17 (112 aa).

It belongs to the bacterial ribosomal protein bL17 family. As to quaternary structure, part of the 50S ribosomal subunit. Contacts protein L32.

This chain is Large ribosomal subunit protein bL17, found in Desulforudis audaxviator (strain MP104C).